We begin with the raw amino-acid sequence, 349 residues long: N-acetyltaurine hydrolase (349 aa).

A divalent metal cation contacts are provided by histidine 26, histidine 28, glutamate 169, histidine 201, histidine 230, and aspartate 298.

Belongs to the metallo-dependent hydrolases superfamily. Phosphotriesterase family. It depends on a divalent metal cation as a cofactor.

The protein localises to the cytoplasm. It localises to the cytosol. The enzyme catalyses N-acetyltaurine + H2O = taurine + acetate. The catalysed reaction is N-propanoyltaurine + H2O = propanoate + taurine. It catalyses the reaction N-acetyl-L-methionine + H2O = L-methionine + acetate. It carries out the reaction N-acetyl-L-isoleucine + H2O = L-isoleucine + acetate. The enzyme catalyses N-acetyl-L-leucine + H2O = L-leucine + acetate. The catalysed reaction is N-acetyl-L-valine + H2O = L-valine + acetate. In terms of biological role, N-acetyltaurine hydrolase that catalyzes the hydrolysis of N-acetyltaurine into taurine and acetate. PTER also acts on other N-acetyl amino acids (Met, Ile, Leu, Val) and N-propionyltaurine, but at lower rates. This Salmo salar (Atlantic salmon) protein is N-acetyltaurine hydrolase (pter).